A 325-amino-acid chain; its full sequence is Dimethylsulfide dehydrogenase subunit beta (325 aa).

4Fe-4S ferredoxin-type domains follow at residues 6 to 35 (ISMVLDLNKCIGCQTCTSACKLQWTNRNGR), 123 to 154 (SYYFYLPRICNHCANPGCLAACARNAIYKRQE), and 156 to 185 (GIVLVDQERCRGYRYCITACPYKKVYFNEQ). Residues C15, C18, C21, C25, C132, C135, and C140 each coordinate [4Fe-4S] cluster. [3Fe-4S] cluster-binding residues include C144, C165, and C171. [4Fe-4S] cluster is bound by residues C175, C192, C195, C207, and C211.

As to quaternary structure, heterotrimer of alpha, beta and gamma subunits. The cofactor is [3Fe-4S] cluster. It depends on [4Fe-4S] cluster as a cofactor.

It is found in the periplasm. Its function is as follows. Electron transfer subunit of the dehydrogenase during anaerobic growth on dimethyl sulfide. In Rhodovulum sulfidophilum (Rhodobacter sulfidophilus), this protein is Dimethylsulfide dehydrogenase subunit beta (ddhB).